We begin with the raw amino-acid sequence, 651 residues long: Probable potassium transport system protein Kup (651 aa).

The next 12 membrane-spanning stretches (helical) occupy residues 41–61 (LVLGALGVVYGDIGTSPIYAF), 82–102 (VVSLIFWALTLVVTVKYVLFV), 130–150 (LILGVGICGAALFFGDAVITP), 163–183 (IVAPNLTPFVVPATVVILVTL), 194–214 (VAIVFGPIMALWFVALGASGL), 235–255 (FLTVSPAVAFVTVGAVFLAMT), 276–296 (WLWIVFPCLLLNYFGQAAFIL), 309–329 (MIPSFALWPMVLLATAATVIA), 366–386 (IYIPRVNLLLGLAVVILVLGF), 395–415 (AYGIAVTGNMLVTTVLLYIVM), 426–446 (ALPIILGFLVIDMLFFSANII), and 450–470 (EGGWASIGIATVLVLIMWTWV).

Belongs to the HAK/KUP transporter (TC 2.A.72) family.

The protein resides in the cell inner membrane. The catalysed reaction is K(+)(in) + H(+)(in) = K(+)(out) + H(+)(out). Transport of potassium into the cell. Likely operates as a K(+):H(+) symporter. In Brucella melitensis biotype 1 (strain ATCC 23456 / CCUG 17765 / NCTC 10094 / 16M), this protein is Probable potassium transport system protein Kup.